A 291-amino-acid polypeptide reads, in one-letter code: DNA N6-methyl adenine demethylase (291 aa).

Residues 85-256 (GLTLIHNFLS…RGRRIALTMR (172 aa)) enclose the Fe2OG dioxygenase domain. 171-173 (LEY) lines the 2-oxoglutarate pocket. The Fe cation site is built by histidine 184, aspartate 186, and histidine 239.

The protein belongs to the alkB family. Interacts with top-2; the interaction is required for localization of top-2 to DNA. Also interacts with mtss-1, his-24, ule-3, C18B2.3, pgl-1, ceh-93, mcm-4 and F37C4.5. Fe(2+) is required as a cofactor.

Its subcellular location is the nucleus. It carries out the reaction an N(6)-methyl-2'-deoxyadenosine in DNA + 2-oxoglutarate + O2 = a 2'-deoxyadenosine in DNA + formaldehyde + succinate + CO2. Functionally, dioxygenase that specifically demethylates DNA methylated on the 6th position of adenine (N(6)-methyladenosine) DNA. N(6)-methyladenosine (m6A) DNA is involved in epigenetic transgenerational inheritance. Plays an essential role in DNA replication and repair in the germline during meiosis. Binds to components of the DNA replication machinery such as top-2, and directs their localization to DNA to control DNA replication. The polypeptide is DNA N6-methyl adenine demethylase (Caenorhabditis elegans).